The sequence spans 105 residues: Large ribosomal subunit protein uL24 (105 aa).

It belongs to the universal ribosomal protein uL24 family. Part of the 50S ribosomal subunit.

One of two assembly initiator proteins, it binds directly to the 5'-end of the 23S rRNA, where it nucleates assembly of the 50S subunit. Functionally, one of the proteins that surrounds the polypeptide exit tunnel on the outside of the subunit. The chain is Large ribosomal subunit protein uL24 from Dictyoglomus turgidum (strain DSM 6724 / Z-1310).